Consider the following 474-residue polypeptide: tRNA-2-methylthio-N(6)-dimethylallyladenosine synthase (474 aa).

The 118-residue stretch at 3 to 120 folds into the MTTase N-terminal domain; sequence KKLLIKTWGC…LPEMIKQSQS (118 aa). [4Fe-4S] cluster contacts are provided by C12, C49, C83, C157, C161, and C164. The region spanning 143-375 is the Radical SAM core domain; the sequence is RAEGATAFVS…QQTVNTQAMR (233 aa). Residues 378–441 enclose the TRAM domain; it reads RQMLDTEQRV…ANSLRGELVR (64 aa).

It belongs to the methylthiotransferase family. MiaB subfamily. In terms of assembly, monomer. [4Fe-4S] cluster is required as a cofactor.

It is found in the cytoplasm. It catalyses the reaction N(6)-dimethylallyladenosine(37) in tRNA + (sulfur carrier)-SH + AH2 + 2 S-adenosyl-L-methionine = 2-methylsulfanyl-N(6)-dimethylallyladenosine(37) in tRNA + (sulfur carrier)-H + 5'-deoxyadenosine + L-methionine + A + S-adenosyl-L-homocysteine + 2 H(+). In terms of biological role, catalyzes the methylthiolation of N6-(dimethylallyl)adenosine (i(6)A), leading to the formation of 2-methylthio-N6-(dimethylallyl)adenosine (ms(2)i(6)A) at position 37 in tRNAs that read codons beginning with uridine. This Vibrio campbellii (strain ATCC BAA-1116) protein is tRNA-2-methylthio-N(6)-dimethylallyladenosine synthase.